Reading from the N-terminus, the 265-residue chain is Orotidine 5'-phosphate decarboxylase (265 aa).

Substrate contacts are provided by residues D38, 60–62 (KTH), 91–100 (DRKFADIGNT), Y213, and R232. Residue K93 is the Proton donor of the active site.

This sequence belongs to the OMP decarboxylase family.

The catalysed reaction is orotidine 5'-phosphate + H(+) = UMP + CO2. The protein operates within pyrimidine metabolism; UMP biosynthesis via de novo pathway; UMP from orotate: step 2/2. In Rhizopus oryzae (Mucormycosis agent), this protein is Orotidine 5'-phosphate decarboxylase (pyrG).